We begin with the raw amino-acid sequence, 491 residues long: Ketol-acid reductoisomerase (NADP(+)) (491 aa).

The region spanning 15–208 is the KARI N-terminal Rossmann domain; it reads AQLGKCRFMG…GGHRAGVLES (194 aa). Residues 45–48, R68, R76, S78, and 108–110 contribute to the NADP(+) site; these read CGAQ and DKQ. H132 is a catalytic residue. G158 is a binding site for NADP(+). KARI C-terminal knotted domains lie at 209-344 and 345-484; these read SFVA…TAPQ and YEGK…MTDM. Residues D217, E221, E389, and E393 each contribute to the Mg(2+) site. S414 provides a ligand contact to substrate.

It belongs to the ketol-acid reductoisomerase family. Mg(2+) serves as cofactor.

It catalyses the reaction (2R)-2,3-dihydroxy-3-methylbutanoate + NADP(+) = (2S)-2-acetolactate + NADPH + H(+). The enzyme catalyses (2R,3R)-2,3-dihydroxy-3-methylpentanoate + NADP(+) = (S)-2-ethyl-2-hydroxy-3-oxobutanoate + NADPH + H(+). It participates in amino-acid biosynthesis; L-isoleucine biosynthesis; L-isoleucine from 2-oxobutanoate: step 2/4. Its pathway is amino-acid biosynthesis; L-valine biosynthesis; L-valine from pyruvate: step 2/4. Functionally, involved in the biosynthesis of branched-chain amino acids (BCAA). Catalyzes an alkyl-migration followed by a ketol-acid reduction of (S)-2-acetolactate (S2AL) to yield (R)-2,3-dihydroxy-isovalerate. In the isomerase reaction, S2AL is rearranged via a Mg-dependent methyl migration to produce 3-hydroxy-3-methyl-2-ketobutyrate (HMKB). In the reductase reaction, this 2-ketoacid undergoes a metal-dependent reduction by NADPH to yield (R)-2,3-dihydroxy-isovalerate. The protein is Ketol-acid reductoisomerase (NADP(+)) of Shigella dysenteriae serotype 1 (strain Sd197).